Reading from the N-terminus, the 87-residue chain is Small ribosomal subunit protein eS21 (87 aa).

It belongs to the eukaryotic ribosomal protein eS21 family. In terms of assembly, component of the small ribosomal subunit. Mature ribosomes consist of a small (40S) and a large (60S) subunit. The 40S subunit contains about 33 different proteins and 1 molecule of RNA (18S). The 60S subunit contains about 49 different proteins and 3 molecules of RNA (25S, 5.8S and 5S).

Its subcellular location is the cytoplasm. Functionally, required for the processing of the 20S rRNA-precursor to mature 18S rRNA in a late step of the maturation of 40S ribosomal subunits. Has a physiological role leading to 18S rRNA stability. This is Small ribosomal subunit protein eS21 (RPS21) from Candida glabrata (strain ATCC 2001 / BCRC 20586 / JCM 3761 / NBRC 0622 / NRRL Y-65 / CBS 138) (Yeast).